Here is a 439-residue protein sequence, read N- to C-terminus: Ribosomal protein uS12 methylthiotransferase RimO (439 aa).

The 111-residue stretch at 4–114 (PKVGFVSLGR…VVRAVHGVAP (111 aa)) folds into the MTTase N-terminal domain. The Radical SAM core domain maps to 133 to 370 (LTPRHYAYLK…MEHQQAISTA (238 aa)). [4Fe-4S] cluster-binding residues include Cys147, Cys151, and Cys154. Residues 373–439 (STRVGREIDV…EYDLWGERIA (67 aa)) form the TRAM domain.

This sequence belongs to the methylthiotransferase family. RimO subfamily. [4Fe-4S] cluster serves as cofactor.

The protein resides in the cytoplasm. It catalyses the reaction L-aspartate(89)-[ribosomal protein uS12]-hydrogen + (sulfur carrier)-SH + AH2 + 2 S-adenosyl-L-methionine = 3-methylsulfanyl-L-aspartate(89)-[ribosomal protein uS12]-hydrogen + (sulfur carrier)-H + 5'-deoxyadenosine + L-methionine + A + S-adenosyl-L-homocysteine + 2 H(+). Its function is as follows. Catalyzes the methylthiolation of an aspartic acid residue of ribosomal protein uS12. The protein is Ribosomal protein uS12 methylthiotransferase RimO of Bordetella bronchiseptica (strain ATCC BAA-588 / NCTC 13252 / RB50) (Alcaligenes bronchisepticus).